The primary structure comprises 162 residues: Heat shock protein beta-6 (162 aa).

The interval 1 to 72 (MEIPVPVQPS…PTAQVSTDSG (72 aa)) is involved in stabilization of the HSPB1:HSBP6 heterodimer. A Phosphoserine modification is found at S16. Positions 56-162 (RAPSVALPTA…AQLPSPPAAK (107 aa)) constitute a sHSP domain. Q66 carries the post-translational modification Deamidated glutamine. S157 is subject to Phosphoserine.

The protein belongs to the small heat shock protein (HSP20) family. Homodimer. Small heat shock proteins form high molecular mass oligomers containing variable number of monomers; these oligomers display a very flexible quaternary structure easily exchanging their subunits. Heterooligomer with HSPB1; formed through oligomerization of HSPB1:HSBP6 dimers; subunit exchange leads to formation of at least two different heterooligomeric complexes, differing in variable quantities of HSPB1 and HSPB6 homodimers in addition to HSPB1:HSPB6 heterodimers. Heterooligomer with CRYAB; large heterooligomers consist of CRYAB homodimers and HSPB5:HSPB6 heterodimers but lacking HSPB6 homodimers. Interacts with BAG3. Interacts (phosphorylated) with YWHAZ. Interacts with PDE4A and PDE4D; required for maintenance of the non-phosphorylated state of HSPB6 under basal conditions. Interacts with KDR. Interacts with PRKD1. Phosphorylated at Ser-16 by PKA and probably PKD1K; required to protect cardiomyocytes from apoptosis.

Its subcellular location is the cytoplasm. The protein resides in the nucleus. The protein localises to the secreted. Small heat shock protein which functions as a molecular chaperone probably maintaining denatured proteins in a folding-competent state. Seems to have versatile functions in various biological processes. Plays a role in regulating muscle function such as smooth muscle vasorelaxation and cardiac myocyte contractility. May regulate myocardial angiogenesis implicating KDR. Overexpression mediates cardioprotection and angiogenesis after induced damage. Stabilizes monomeric YWHAZ thereby supporting YWHAZ chaperone-like activity. The chain is Heat shock protein beta-6 (Hspb6) from Mus musculus (Mouse).